The primary structure comprises 213 residues: Ras-related protein Rab-39B (213 aa).

Ser17, Gly20, Lys21, Ser22, Cys23, Ser37, and Thr40 together coordinate GTP. Residue Ser22 participates in Mg(2+) binding. The segment at 35–43 is switch-I; sequence QVSDPTVGV. Thr40 and Asp64 together coordinate Mg(2+). GTP contacts are provided by Gly67, His123, Lys124, Asp126, Ala154, and Arg155. Residues 67–83 form a switch-II region; it reads GQERFRSITRAYYRNSV. Phosphoserine is present on Ser201. S-geranylgeranyl cysteine attachment occurs at residues Cys211 and Cys213. Cys213 is subject to Cysteine methyl ester.

It belongs to the small GTPase superfamily. Rab family. In terms of assembly, interacts (GDP-bound) with C9orf72; C9orf72 in complex with SMCR8 acts as a GEF for RAB39B. Interacts (in GTP-bound form) with PICK1 (via PDZ domain); a PICK1 homodimer may allow simultaneous association of RAB39B and GRIA2 to PICK1 which is involved in GRIA2 trafficking. Interacts with isoform c of RASSF1; the interaction is strong. Interacts with isoform a of RASSF1; the interaction is weak. Interacts with the DLG4/PSD-95. Interacts (GTP-bound) with HOPS complex components VPS39 and VPS41. It depends on Mg(2+) as a cofactor. Highly expressed in the brain.

The protein localises to the cell membrane. It localises to the cytoplasmic vesicle membrane. It is found in the golgi apparatus. Its subcellular location is the cytoplasmic vesicle. The protein resides in the autophagosome membrane. The protein localises to the autolysosome membrane. It catalyses the reaction GTP + H2O = GDP + phosphate + H(+). Its activity is regulated as follows. Regulated by guanine nucleotide exchange factors (GEFs) including C9orf72-SMCR8 complex, which promote the exchange of bound GDP for free GTP. Regulated by GTPase activating proteins (GAPs) which increase the GTP hydrolysis activity. Inhibited by GDP dissociation inhibitors (GDIs). Its function is as follows. The small GTPases Rab are key regulators of intracellular membrane trafficking, from the formation of transport vesicles to their fusion with membranes. Rabs cycle between an inactive GDP-bound form and an active GTP-bound form that is able to recruit to membranes different sets of downstream effectors directly responsible for vesicle formation, movement, tethering and fusion. RAB39B is involved in autophagy and may function in autophagosome formation. Binds downstream effector PICK1 to ensure selectively GRIA2 exit from the endoplasmic reticulum to the Golgi and to regulate AMPAR composition at the post-synapses and thus synaptic transmission. May regulate the homeostasis of SNCA/alpha-synuclein. The chain is Ras-related protein Rab-39B from Homo sapiens (Human).